The following is a 555-amino-acid chain: Formate--tetrahydrofolate ligase (555 aa).

65–72 contributes to the ATP binding site; sequence TPAGEGKT.

The protein belongs to the formate--tetrahydrofolate ligase family.

The enzyme catalyses (6S)-5,6,7,8-tetrahydrofolate + formate + ATP = (6R)-10-formyltetrahydrofolate + ADP + phosphate. It functions in the pathway one-carbon metabolism; tetrahydrofolate interconversion. In Thermoanaerobacter pseudethanolicus (strain ATCC 33223 / 39E) (Clostridium thermohydrosulfuricum), this protein is Formate--tetrahydrofolate ligase.